The sequence spans 467 residues: Fumarate hydratase class II (467 aa).

Substrate is bound by residues Ser98–Thr100, Arg126, His129–Asp132, Ser139–Asn141, and Thr187. The active-site Proton donor/acceptor is His188. Ser318 is a catalytic residue. Residues Ser319 and Lys324–Asn326 contribute to the substrate site.

This sequence belongs to the class-II fumarase/aspartase family. Fumarase subfamily. Homotetramer.

Its subcellular location is the cytoplasm. It carries out the reaction (S)-malate = fumarate + H2O. It functions in the pathway carbohydrate metabolism; tricarboxylic acid cycle; (S)-malate from fumarate: step 1/1. Its function is as follows. Involved in the TCA cycle. Catalyzes the stereospecific interconversion of fumarate to L-malate. This chain is Fumarate hydratase class II, found in Escherichia coli O157:H7.